Reading from the N-terminus, the 128-residue chain is NADPH-dependent 7-cyano-7-deazaguanine reductase (128 aa).

C34 serves as the catalytic Thioimide intermediate. D41 functions as the Proton donor in the catalytic mechanism. Residues 56-58 (IEL) and 75-76 (HE) each bind substrate.

Belongs to the GTP cyclohydrolase I family. QueF type 1 subfamily.

The protein localises to the cytoplasm. The enzyme catalyses 7-aminomethyl-7-carbaguanine + 2 NADP(+) = 7-cyano-7-deazaguanine + 2 NADPH + 3 H(+). It participates in tRNA modification; tRNA-queuosine biosynthesis. Catalyzes the NADPH-dependent reduction of 7-cyano-7-deazaguanine (preQ0) to 7-aminomethyl-7-deazaguanine (preQ1). This is NADPH-dependent 7-cyano-7-deazaguanine reductase from Ruthia magnifica subsp. Calyptogena magnifica.